The following is a 38-amino-acid chain: Photosystem II reaction center protein L (38 aa).

The helical transmembrane segment at Ser-17–Phe-37 threads the bilayer.

The protein belongs to the PsbL family. In terms of assembly, PSII is composed of 1 copy each of membrane proteins PsbA, PsbB, PsbC, PsbD, PsbE, PsbF, PsbH, PsbI, PsbJ, PsbK, PsbL, PsbM, PsbT, PsbX, PsbY, PsbZ, Psb30/Ycf12, at least 3 peripheral proteins of the oxygen-evolving complex and a large number of cofactors. It forms dimeric complexes.

It localises to the plastid. Its subcellular location is the chloroplast thylakoid membrane. In terms of biological role, one of the components of the core complex of photosystem II (PSII). PSII is a light-driven water:plastoquinone oxidoreductase that uses light energy to abstract electrons from H(2)O, generating O(2) and a proton gradient subsequently used for ATP formation. It consists of a core antenna complex that captures photons, and an electron transfer chain that converts photonic excitation into a charge separation. This subunit is found at the monomer-monomer interface and is required for correct PSII assembly and/or dimerization. This Ephedra sinica (Chinese ephedra) protein is Photosystem II reaction center protein L.